Reading from the N-terminus, the 108-residue chain is uncharacterized protein (108 aa).

Positions 81–108 (FKCLDSPPPVPPSSSQGEDEENTVDSQY) are disordered. The span at 97–108 (GEDEENTVDSQY) shows a compositional bias: acidic residues.

This is an uncharacterized protein from Saccharomyces cerevisiae (strain ATCC 204508 / S288c) (Baker's yeast).